The primary structure comprises 653 residues: UvrABC system protein C (653 aa).

Positions 44-122 (NAPGVYRMVN…IKRLRPRFNV (79 aa)) constitute a GIY-YIG domain. The UVR domain maps to 232–267 (STVKAEIATAMQEASQALDFERAAIYRDRLAALSHV).

It belongs to the UvrC family. As to quaternary structure, interacts with UvrB in an incision complex.

It localises to the cytoplasm. Its function is as follows. The UvrABC repair system catalyzes the recognition and processing of DNA lesions. UvrC both incises the 5' and 3' sides of the lesion. The N-terminal half is responsible for the 3' incision and the C-terminal half is responsible for the 5' incision. The sequence is that of UvrABC system protein C from Chelativorans sp. (strain BNC1).